A 430-amino-acid chain; its full sequence is Dynactin subunit 2 (430 aa).

Disordered stretches follow at residues 1–51 and 201–228; these read MSEG…IDRS and SLSSSTTEQNTQQPSNNNTTTNITSSSS. A compositionally biased stretch (polar residues) spans 32–44; it reads SISNLADESSELV. 2 coiled-coil regions span residues 241–319 and 397–430; these read TGEQ…QDET and DDSFKSNLLTIKSNIQQLESRIETLQNRQQQQQQ.

Belongs to the dynactin subunit 2 family. In terms of assembly, subunit of dynactin, a multiprotein complex associated with dynein.

It is found in the cytoplasm. The protein localises to the cytoskeleton. It localises to the membrane. Functionally, modulates cytoplasmic dynein binding to an organelle, and plays a role in prometaphase chromosome alignment and spindle organization during mitosis. In Dictyostelium discoideum (Social amoeba), this protein is Dynactin subunit 2 (dynB).